Reading from the N-terminus, the 86-residue chain is Candiduxin-1 (86 aa).

The N-terminal stretch at 1–21 is a signal peptide; the sequence is MKTLLLTLVVLTIACLDLGYT. Disulfide bonds link C24/C45, C38/C62, C66/C78, and C79/C84.

It belongs to the three-finger toxin family. Short-chain subfamily. Orphan group IX sub-subfamily. As to expression, expressed by the venom gland.

It localises to the secreted. The chain is Candiduxin-1 from Bungarus candidus (Malayan krait).